The following is a 100-amino-acid chain: Small ribosomal subunit protein uS14c (100 aa).

Belongs to the universal ribosomal protein uS14 family. As to quaternary structure, part of the 30S ribosomal subunit.

It is found in the plastid. It localises to the cyanelle. Binds 16S rRNA, required for the assembly of 30S particles. The chain is Small ribosomal subunit protein uS14c from Cyanophora paradoxa.